Consider the following 571-residue polypeptide: MRTSNYLLSTLKETPNDAEVISHQLMLRAGMIRKLASGLYTWLPTGLRVLRKVENIVRQEIDNAGAVEILMPVVQPFELWEETGRSEKMGPELLRFTDRHSRPFVLSPTAEEVVTSLVRNEISSYKQLPLNLYQIQTKFRDERRPRFGVMRAREFSMMDAYSFDIDKEGLEKSYQAMHDAYCKAFDRMGLEYRPVLADSGAIGGSGSQEFHVLAESGEDLIAFSSESDYAANIEKAEALAPTEEVAAPTQEMELVDTPNAKTIAELVEQHGLAIEKTVKTLFVKASDEVEADIIALIVRGDHELNEVKAENLPQIASPLEMASEEEIRALVGAGPGSLGPVGLELPFIADRSVAVMSDFGAGANVDGKHYFGINWGRDVELAQVEDLRNVVEGDLSPCGQGTIQLKRGIEVGHIFQLGNTYSKAMNCNVLGPDGKSVILEMGCYGIGVSRVVASAIEQNHDKFGITWPDALAPFQVAIVPMNMHKSERVKEAAEKLYAELTAMGIEVLFDDRKERPGVMFKDIELVGIPHTIVIGDRSMDEGNFEYKNRRTGDKEAIAMDTVIEHLKAQLA.

The protein belongs to the class-II aminoacyl-tRNA synthetase family. ProS type 1 subfamily. As to quaternary structure, homodimer.

It is found in the cytoplasm. The enzyme catalyses tRNA(Pro) + L-proline + ATP = L-prolyl-tRNA(Pro) + AMP + diphosphate. Functionally, catalyzes the attachment of proline to tRNA(Pro) in a two-step reaction: proline is first activated by ATP to form Pro-AMP and then transferred to the acceptor end of tRNA(Pro). As ProRS can inadvertently accommodate and process non-cognate amino acids such as alanine and cysteine, to avoid such errors it has two additional distinct editing activities against alanine. One activity is designated as 'pretransfer' editing and involves the tRNA(Pro)-independent hydrolysis of activated Ala-AMP. The other activity is designated 'posttransfer' editing and involves deacylation of mischarged Ala-tRNA(Pro). The misacylated Cys-tRNA(Pro) is not edited by ProRS. The protein is Proline--tRNA ligase of Vibrio atlanticus (strain LGP32) (Vibrio splendidus (strain Mel32)).